Here is a 425-residue protein sequence, read N- to C-terminus: Serine--tRNA ligase (425 aa).

Residue 230 to 232 (TAE) coordinates L-serine. Residue 261 to 263 (RSE) coordinates ATP. Residue glutamate 284 coordinates L-serine. 348–351 (EISS) is an ATP binding site. L-serine is bound at residue serine 384.

It belongs to the class-II aminoacyl-tRNA synthetase family. Type-1 seryl-tRNA synthetase subfamily. As to quaternary structure, homodimer. The tRNA molecule binds across the dimer.

The protein localises to the cytoplasm. The catalysed reaction is tRNA(Ser) + L-serine + ATP = L-seryl-tRNA(Ser) + AMP + diphosphate + H(+). It catalyses the reaction tRNA(Sec) + L-serine + ATP = L-seryl-tRNA(Sec) + AMP + diphosphate + H(+). It participates in aminoacyl-tRNA biosynthesis; selenocysteinyl-tRNA(Sec) biosynthesis; L-seryl-tRNA(Sec) from L-serine and tRNA(Sec): step 1/1. In terms of biological role, catalyzes the attachment of serine to tRNA(Ser). Is also able to aminoacylate tRNA(Sec) with serine, to form the misacylated tRNA L-seryl-tRNA(Sec), which will be further converted into selenocysteinyl-tRNA(Sec). In Maridesulfovibrio salexigens (strain ATCC 14822 / DSM 2638 / NCIMB 8403 / VKM B-1763) (Desulfovibrio salexigens), this protein is Serine--tRNA ligase.